The chain runs to 807 residues: Oxysterol-binding protein 1 (807 aa).

N-acetylalanine is present on A2. A disordered region spans residues 61 to 86; the sequence is GAGGVAAAGPAPAPPTGGSGGSGAGG. Over residues 77–86 the composition is skewed to gly residues; it reads GGSGGSGAGG. In terms of domain architecture, PH spans 88-181; the sequence is GSAREGWLFK…WVTALELAKA (94 aa). 117-122 is a binding site for a 1,2-diacyl-sn-glycero-3-phospho-(1D-myo-inositol 4-phosphate); it reads LSYYRS. S190, S193, S198, S238, and S240 each carry phosphoserine. Residues 291 to 326 adopt a coiled-coil conformation; it reads QKSLQYERDQRIRLEETLEQLAKQHNHLERAFRGAT. Residue Q314 coordinates 20-hydroxycholesterol. Q314 provides a ligand contact to 25-hydroxycholesterol. Q314 lines the 7beta-hydroxycholesterol pocket. A cholesterol-binding site is contributed by Q314. Q314 is a binding site for ergosterol. The segment at 329–353 is disordered; that stretch reads PANTPGNVGSGKDQCCSGKGDMSDE. Residues S338, S345, and S351 each carry the phosphoserine modification. The FFAT signature appears at 358–364; it reads EFFDAPE. At T377 the chain carries Phosphothreonine. Phosphoserine occurs at positions 379, 382, 385, 386, and 389. A 1,2-diacyl-sn-glycero-3-phospho-(1D-myo-inositol 4-phosphate)-binding positions include 493–496 and 522–523; these read KPFN and HH. The interval 710–759 is disordered; the sequence is TAPTDSRLRPDQRLMENGRWDEANAEKQRLEEKQRLSRKKREAEAMKATE. A compositionally biased stretch (basic and acidic residues) spans 715–759; sequence SRLRPDQRLMENGRWDEANAEKQRLEEKQRLSRKKREAEAMKATE. Residues 730 to 760 adopt a coiled-coil conformation; that stretch reads DEANAEKQRLEEKQRLSRKKREAEAMKATED.

It belongs to the OSBP family. In terms of assembly, homodimer or homotrimer. Interacts (via FFAT motif) with VAPA. Interacts (via C-terminus) with RELCH (via the third HEAT repeat). Found in a complex composed of RELCH, OSBP1 and RAB11A. In terms of tissue distribution, widely expressed.

Its subcellular location is the cytoplasm. It localises to the cytosol. The protein resides in the perinuclear region. The protein localises to the golgi apparatus membrane. It is found in the endoplasmic reticulum membrane. Its subcellular location is the golgi apparatus. It localises to the trans-Golgi network. In terms of biological role, lipid transporter involved in lipid countertransport between the Golgi complex and membranes of the endoplasmic reticulum: specifically exchanges sterol with phosphatidylinositol 4-phosphate (PI4P), delivering sterol to the Golgi in exchange for PI4P, which is degraded by the SAC1/SACM1L phosphatase in the endoplasmic reticulum. Binds cholesterol and a range of oxysterols including 25-hydroxycholesterol. Cholesterol binding promotes the formation of a complex with PP2A and a tyrosine phosphatase which dephosphorylates ERK1/2, whereas 25-hydroxycholesterol causes its disassembly. Regulates cholesterol efflux by decreasing ABCA1 stability. The chain is Oxysterol-binding protein 1 from Homo sapiens (Human).